The following is a 90-amino-acid chain: UPF0367 protein Ava_2513 (90 aa).

This sequence belongs to the UPF0367 family.

The chain is UPF0367 protein Ava_2513 from Trichormus variabilis (strain ATCC 29413 / PCC 7937) (Anabaena variabilis).